A 454-amino-acid polypeptide reads, in one-letter code: Tubulin alpha-A chain (454 aa).

Residues Gln-12, Asp-72, Ser-141, Gly-145, Thr-146, Thr-180, Asn-207, and Asn-229 each contribute to the GTP site. Asp-72 serves as a coordination point for Mg(2+). Residue Glu-255 is part of the active site.

This sequence belongs to the tubulin family. Dimer of alpha and beta chains. A typical microtubule is a hollow water-filled tube with an outer diameter of 25 nm and an inner diameter of 15 nM. Alpha-beta heterodimers associate head-to-tail to form protofilaments running lengthwise along the microtubule wall with the beta-tubulin subunit facing the microtubule plus end conferring a structural polarity. Microtubules usually have 13 protofilaments but different protofilament numbers can be found in some organisms and specialized cells. Requires Mg(2+) as cofactor.

Its subcellular location is the cytoplasm. It is found in the cytoskeleton. The catalysed reaction is GTP + H2O = GDP + phosphate + H(+). In terms of biological role, tubulin is the major constituent of microtubules, a cylinder consisting of laterally associated linear protofilaments composed of alpha- and beta-tubulin heterodimers. Microtubules grow by the addition of GTP-tubulin dimers to the microtubule end, where a stabilizing cap forms. Below the cap, tubulin dimers are in GDP-bound state, owing to GTPase activity of alpha-tubulin. The polypeptide is Tubulin alpha-A chain (tba-1) (Neurospora crassa (strain ATCC 24698 / 74-OR23-1A / CBS 708.71 / DSM 1257 / FGSC 987)).